The chain runs to 202 residues: Outer-membrane lipoprotein carrier protein (202 aa).

The N-terminal stretch at 1–18 (MNKLFLILLLIFSHEVFS) is a signal peptide.

It belongs to the LolA family. In terms of assembly, monomer.

The protein localises to the periplasm. In terms of biological role, participates in the translocation of lipoproteins from the inner membrane to the outer membrane. Only forms a complex with a lipoprotein if the residue after the N-terminal Cys is not an aspartate (The Asp acts as a targeting signal to indicate that the lipoprotein should stay in the inner membrane). The protein is Outer-membrane lipoprotein carrier protein of Legionella pneumophila (strain Paris).